The following is a 79-amino-acid chain: RNA-binding protein Hfq (79 aa).

Positions 10 to 70 constitute a Sm domain; it reads DVFLNTVRKQ…ISTIMPGQPV (61 aa).

Belongs to the Hfq family. As to quaternary structure, homohexamer.

In terms of biological role, RNA chaperone that binds small regulatory RNA (sRNAs) and mRNAs to facilitate mRNA translational regulation in response to envelope stress, environmental stress and changes in metabolite concentrations. Also binds with high specificity to tRNAs. The protein is RNA-binding protein Hfq of Bartonella henselae (strain ATCC 49882 / DSM 28221 / CCUG 30454 / Houston 1) (Rochalimaea henselae).